The chain runs to 448 residues: Exodeoxyribonuclease 7 large subunit (448 aa).

This sequence belongs to the XseA family. In terms of assembly, heterooligomer composed of large and small subunits.

It localises to the cytoplasm. It carries out the reaction Exonucleolytic cleavage in either 5'- to 3'- or 3'- to 5'-direction to yield nucleoside 5'-phosphates.. Its function is as follows. Bidirectionally degrades single-stranded DNA into large acid-insoluble oligonucleotides, which are then degraded further into small acid-soluble oligonucleotides. The protein is Exodeoxyribonuclease 7 large subunit of Nitrosomonas europaea (strain ATCC 19718 / CIP 103999 / KCTC 2705 / NBRC 14298).